The following is a 348-amino-acid chain: Inactive rhomboid-related protein 2 (348 aa).

The EF-hand domain maps to 14–49 (IEASSWIRIFRAFDTDHDGLIQCEEMQKTIRDSTYS). Ca(2+) is bound by residues aspartate 27, aspartate 29, aspartate 31, and glutamate 38. The next 7 membrane-spanning stretches (helical) occupy residues 121 to 141 (PPIFLIFLSIVQLAFYLYYVV), 177 to 197 (LINVGIFHIIFNILIQLAIGV), 207 to 227 (IYILYFMGVLFGSILSLALDP), 229 to 249 (VFLCGGAAGSFSLIASHITTI), 263 to 283 (LPILIVFAALDYVLAVYQRFF), 290 to 310 (VSMYGHLGGLVAGILFTFILF), and 323 to 343 (FWVSLVLSGFFIAICITLIAA).

It belongs to the peptidase S54 family.

Its subcellular location is the membrane. Functionally, probable inactive serine protease. This Caenorhabditis elegans protein is Inactive rhomboid-related protein 2.